The primary structure comprises 427 residues: Tol-Pal system protein TolB (427 aa).

An N-terminal signal peptide occupies residues 1-25; the sequence is MKTFAQLRLLLAAAALALLSFSAQA.

Belongs to the TolB family. In terms of assembly, the Tol-Pal system is composed of five core proteins: the inner membrane proteins TolA, TolQ and TolR, the periplasmic protein TolB and the outer membrane protein Pal. They form a network linking the inner and outer membranes and the peptidoglycan layer.

Its subcellular location is the periplasm. Part of the Tol-Pal system, which plays a role in outer membrane invagination during cell division and is important for maintaining outer membrane integrity. The protein is Tol-Pal system protein TolB of Azoarcus sp. (strain BH72).